We begin with the raw amino-acid sequence, 202 residues long: Recombination protein RecR (202 aa).

The C4-type zinc finger occupies 57–72 (CRDCRTFTEDDICAVC). Residues 81–176 (GQICVVESPA…PATRIAHGVP (96 aa)) form the Toprim domain.

This sequence belongs to the RecR family.

In terms of biological role, may play a role in DNA repair. It seems to be involved in an RecBC-independent recombinational process of DNA repair. It may act with RecF and RecO. This is Recombination protein RecR from Photobacterium profundum (strain SS9).